The sequence spans 298 residues: NADH-cytochrome b5 reductase 2 (298 aa).

The chain crosses the membrane as a helical span at residues Phe15 to Ala38. The 105-residue stretch at Asp49 to Glu153 folds into the FAD-binding FR-type domain. Residue Gln156–Leu191 participates in FAD binding.

This sequence belongs to the flavoprotein pyridine nucleotide cytochrome reductase family. FAD is required as a cofactor.

The protein resides in the mitochondrion outer membrane. It carries out the reaction 2 Fe(III)-[cytochrome b5] + NADH = 2 Fe(II)-[cytochrome b5] + NAD(+) + H(+). Functionally, may mediate the reduction of outer membrane cytochrome b5. The chain is NADH-cytochrome b5 reductase 2 (MCR1) from Scheffersomyces stipitis (strain ATCC 58785 / CBS 6054 / NBRC 10063 / NRRL Y-11545) (Yeast).